The primary structure comprises 275 residues: Putative phosphoenolpyruvate synthase regulatory protein (275 aa).

Position 153-160 (153-160 (GVSRSGKT)) interacts with ADP.

The protein belongs to the pyruvate, phosphate/water dikinase regulatory protein family. PSRP subfamily.

The enzyme catalyses [pyruvate, water dikinase] + ADP = [pyruvate, water dikinase]-phosphate + AMP + H(+). The catalysed reaction is [pyruvate, water dikinase]-phosphate + phosphate + H(+) = [pyruvate, water dikinase] + diphosphate. Bifunctional serine/threonine kinase and phosphorylase involved in the regulation of the phosphoenolpyruvate synthase (PEPS) by catalyzing its phosphorylation/dephosphorylation. The sequence is that of Putative phosphoenolpyruvate synthase regulatory protein from Nitrosomonas eutropha (strain DSM 101675 / C91 / Nm57).